Here is a 329-residue protein sequence, read N- to C-terminus: Mas-related G-protein coupled receptor member X2 (329 aa).

Over 1 to 33 (MDPTTPAWGTESTTMNGNDQALPLLCGKETMIS) the chain is Extracellular. The chain crosses the membrane as a helical span at residues 34 to 54 (VFLILFIALVGLVGNAFVLWL). At 55–63 (LGFRMRRNA) the chain is on the cytoplasmic side. Residues 64 to 84 (FSVYVLSLAGADFLFLCFQMT) form a helical membrane-spanning segment. At 85-96 (SCLAYLINFFGS) the chain is on the extracellular side. Residues 97 to 116 (ISINIPSFFTVMTCAYLAGL) form a helical membrane-spanning segment. The Cytoplasmic portion of the chain corresponds to 117–143 (SMLSAISTERCLSVLWPIWYRCRRPRH). Residues 144–164 (LSAVMCVLLWALSLLLSILEG) form a helical membrane-spanning segment. Residues 165-183 (KFCGFLFSDDDPGWCQTFD) lie on the Extracellular side of the membrane. A helical transmembrane segment spans residues 184 to 204 (FITAAWLMFLFVVLCGSSLAL). Residues 205–227 (LVRILCGSRSLPLTRLYLTILLT) lie on the Cytoplasmic side of the membrane. A helical transmembrane segment spans residues 228–248 (VLIFLLCGLPFGIQWFLILWI). Residues 249-263 (WKNSVVLFCHIHPIS) are Extracellular-facing. Residues 264–284 (VVLSSFNSSANPIIYFFVGSF) form a helical membrane-spanning segment. Residues 285–329 (RKQWRLRQPILKLALQRALQDTAEVDHSEGCFSQGTLEMSRSSLV) are Cytoplasmic-facing.

Belongs to the G-protein coupled receptor 1 family. Mas subfamily.

The protein localises to the cell membrane. Mast cell-specific receptor for basic secretagogues, i.e. cationic amphiphilic drugs, as well as endo- or exogenous peptides, consisting of a basic head group and a hydrophobic core. Recognizes and binds small molecules containing a cyclized tetrahydroisoquinoline (THIQ), such as non-steroidal neuromuscular blocking drugs (NMBDs), including tubocurarine and atracurium. In response to these compounds, mediates pseudo-allergic reactions characterized by histamine release, inflammation and airway contraction. The sequence is that of Mas-related G-protein coupled receptor member X2 (MRGPRX2) from Macaca mulatta (Rhesus macaque).